The primary structure comprises 615 residues: Probable inactive purple acid phosphatase 24 (615 aa).

The first 26 residues, 1 to 26 (MARVLGVLLCLLALFSSSLCLDHANG), serve as a signal peptide directing secretion. Residues asparagine 129, asparagine 267, and asparagine 275 are each glycosylated (N-linked (GlcNAc...) asparagine). Residue aspartate 297 participates in Fe cation binding. An N-linked (GlcNAc...) asparagine glycan is attached at asparagine 318. Positions 338 and 341 each coordinate Fe cation. Aspartate 338 contributes to the Zn(2+) binding site. Residues asparagine 371, histidine 460, and histidine 502 each coordinate Zn(2+). Asparagine 371 provides a ligand contact to substrate. Position 502-504 (502-504 (HVH)) interacts with substrate. Histidine 504 provides a ligand contact to Fe cation. A glycan (N-linked (GlcNAc...) asparagine) is linked at asparagine 592.

Belongs to the metallophosphoesterase superfamily. Purple acid phosphatase family. As to quaternary structure, homodimer. The cofactor is Fe cation. It depends on Zn(2+) as a cofactor. Specifically expressed in flowers.

It localises to the secreted. In Arabidopsis thaliana (Mouse-ear cress), this protein is Probable inactive purple acid phosphatase 24 (PAP24).